The sequence spans 282 residues: Glutamate--LysW ligase ArgX (282 aa).

Residues lysine 87, lysine 127, 131–137 (GSWGRLV), and 167–178 (QEYINYKSRDIR) each bind ATP. Residues 91-277 (YSKLYREGIP…VAEELVSYVK (187 aa)) enclose the ATP-grasp domain. A substrate-binding site is contributed by arginine 192. ATP is bound at residue asparagine 202. 203-204 (IA) lines the substrate pocket. Mg(2+) contacts are provided by aspartate 237, glutamate 250, and asparagine 252. 256–260 (EFKGF) is a binding site for substrate. Positions 259-260 (GF) match the GF motif that is essential for ArgX substrate specificity motif.

This sequence belongs to the RimK family. LysX subfamily. Homotetramer. Interacts with LysW. It depends on Mg(2+) as a cofactor.

The enzyme catalyses [amino-group carrier protein]-C-terminal-L-glutamate + L-glutamate + ATP = [amino-group carrier protein]-C-terminal-gamma-(L-glutamyl)-L-glutamate + ADP + phosphate + H(+). It participates in amino-acid biosynthesis; L-arginine biosynthesis. Functionally, catalyzes the ATP-dependent formation of a covalent bond between the amino group of glutamate and the gamma-carboxyl group of the C-terminal glutamate residue in LysW. The sequence is that of Glutamate--LysW ligase ArgX from Sulfolobus acidocaldarius (strain ATCC 33909 / DSM 639 / JCM 8929 / NBRC 15157 / NCIMB 11770).